Here is a 244-residue protein sequence, read N- to C-terminus: Tabinhibitin 8 (244 aa).

The signal sequence occupies residues Met1–Ser23. The SCP domain occupies Tyr67–Cys194. The short motif at Arg143–Asp145 is the Cell attachment site element.

The protein belongs to the CRISP family. As to expression, expressed in salivary glands.

The protein resides in the secreted. In terms of biological role, inhibits platelet aggregation induced by all agonists tested (ADP, arachidonic acid, the thromboxane A2 analog U46619, thrombin, and snake venom snaclecs (TMVA that activates platelet through GPIB, and stejnulxin that specifically acts through GPVI (GP6))). May act by competing with fibrinogen for binding to glycoprotein IIb/IIIa (ITGA2B/ITGB3). This Tabanus yao (Horsefly) protein is Tabinhibitin 8.